We begin with the raw amino-acid sequence, 366 residues long: MSASLKRTPLADAHVAAGARMVDFGGWDMPLAYGSQLEEHHAVRRDAGMFDVSHMLNVDVTGPDATAFLRRLVANDVARLTVPGKALYSCMLNPQGGIIDDLIVYFFAADQWRVVVNAATADKDVAWMQRVAAAGSYDVAIAPRRDLAMVAVQGPNARARVWAARPAWQAATEPLTPFVAAQVADDTLVARTGYTGEDGFEIVLPADQVVALWNDLLAQGVRPCGLGARDTLRLEAGMNLYGQDMDELTQPDQAGLTWTVSLKDPERRFVGRDALEQFAAPRGFVGLKLQERGVMRAHMAVYTPLGEGEITSGTMSPTLGVSVAFARVPQGVQPGQTVEVDIRGKRVPALVCKLPFVRHGKAVEHS.

The protein belongs to the GcvT family. As to quaternary structure, the glycine cleavage system is composed of four proteins: P, T, L and H.

The catalysed reaction is N(6)-[(R)-S(8)-aminomethyldihydrolipoyl]-L-lysyl-[protein] + (6S)-5,6,7,8-tetrahydrofolate = N(6)-[(R)-dihydrolipoyl]-L-lysyl-[protein] + (6R)-5,10-methylene-5,6,7,8-tetrahydrofolate + NH4(+). Its function is as follows. The glycine cleavage system catalyzes the degradation of glycine. The chain is Aminomethyltransferase from Bordetella petrii (strain ATCC BAA-461 / DSM 12804 / CCUG 43448).